We begin with the raw amino-acid sequence, 330 residues long: D-lactate dehydrogenase (330 aa).

Residues 156-157 (RI), aspartate 176, 206-207 (VP), 233-235 (AAR), and aspartate 259 contribute to the NAD(+) site. Arginine 235 is a catalytic residue. Residue glutamate 264 is part of the active site. Histidine 296 functions as the Proton donor in the catalytic mechanism.

The protein belongs to the D-isomer specific 2-hydroxyacid dehydrogenase family.

It catalyses the reaction (R)-lactate + NAD(+) = pyruvate + NADH + H(+). The protein is D-lactate dehydrogenase (ldhD) of Staphylococcus aureus (strain MSSA476).